We begin with the raw amino-acid sequence, 199 residues long: Chaperone protein TorD (199 aa).

It belongs to the TorD/DmsD family. TorD subfamily.

It localises to the cytoplasm. In terms of biological role, involved in the biogenesis of TorA. Acts on TorA before the insertion of the molybdenum cofactor and, as a result, probably favors a conformation of the apoenzyme that is competent for acquiring the cofactor. The sequence is that of Chaperone protein TorD from Actinobacillus pleuropneumoniae serotype 7 (strain AP76).